The chain runs to 159 residues: Capsid protein (159 aa).

The protein belongs to the virgaviridae capsid protein family.

It localises to the virion. Its function is as follows. Capsid protein self-assembles to form rod-shaped virions about 18 nm in diameter with a central canal enclosing the viral genomic RNA. This Tobacco mild green mosaic virus (TMGMV) protein is Capsid protein (CP).